The sequence spans 336 residues: MAFNMHNRNLLSLMHHSPRDVRYLLDLSRDLKRAKYTGTEQQHLKRKNIALIFEKTSTRTRCAFEVAAYDQGANVTYIDPNSSQIGHKESMKDTARVLGRMYDAIEYRGFKQEIVEELATYAGVPVFNGLTAEYHPTQMLADVLTMREHTDKPLHDITYAYLGDARNNMGNSLLLIGAKLGMDVRIAAPKALWPHDDHVAACKKFAEESGARITLTEDPKEAVKGVDFVHTDVWVSMGEPVEAWGERIKELLPYQVNVEIMKAAGNPRVKFMHCLPAFHNSETKVGKQIAEQYPNLKNGIEVTEDVFESPWNIAFEQAENRMHTIKAILVSTLADI.

Carbamoyl phosphate contacts are provided by residues 57–60 (STRT), Q84, R108, and 135–138 (HPTQ). L-ornithine is bound by residues N168, D232, and 236-237 (SM). Residues 274-275 (CL) and R321 contribute to the carbamoyl phosphate site.

Belongs to the aspartate/ornithine carbamoyltransferase superfamily. OTCase family.

Its subcellular location is the cytoplasm. The catalysed reaction is carbamoyl phosphate + L-ornithine = L-citrulline + phosphate + H(+). The protein operates within amino-acid degradation; L-arginine degradation via ADI pathway; carbamoyl phosphate from L-arginine: step 2/2. In terms of biological role, reversibly catalyzes the transfer of the carbamoyl group from carbamoyl phosphate (CP) to the N(epsilon) atom of ornithine (ORN) to produce L-citrulline. This chain is Ornithine carbamoyltransferase, catabolic (arcB), found in Ectopseudomonas mendocina (Pseudomonas mendocina).